A 274-amino-acid polypeptide reads, in one-letter code: Dermonecrotic toxin SdSicTox-betaIIB1bi (274 aa).

H5 is an active-site residue. E25 and D27 together coordinate Mg(2+). Catalysis depends on H41, which acts as the Nucleophile. Intrachain disulfides connect C45-C51 and C47-C190. D85 lines the Mg(2+) pocket.

It belongs to the arthropod phospholipase D family. Class II subfamily. The cofactor is Mg(2+). In terms of tissue distribution, expressed by the venom gland.

The protein localises to the secreted. It carries out the reaction an N-(acyl)-sphingosylphosphocholine = an N-(acyl)-sphingosyl-1,3-cyclic phosphate + choline. It catalyses the reaction an N-(acyl)-sphingosylphosphoethanolamine = an N-(acyl)-sphingosyl-1,3-cyclic phosphate + ethanolamine. The catalysed reaction is a 1-acyl-sn-glycero-3-phosphocholine = a 1-acyl-sn-glycero-2,3-cyclic phosphate + choline. The enzyme catalyses a 1-acyl-sn-glycero-3-phosphoethanolamine = a 1-acyl-sn-glycero-2,3-cyclic phosphate + ethanolamine. In terms of biological role, dermonecrotic toxins cleave the phosphodiester linkage between the phosphate and headgroup of certain phospholipids (sphingolipid and lysolipid substrates), forming an alcohol (often choline) and a cyclic phosphate. This toxin acts on sphingomyelin (SM). It may also act on ceramide phosphoethanolamine (CPE), lysophosphatidylcholine (LPC) and lysophosphatidylethanolamine (LPE), but not on lysophosphatidylserine (LPS), and lysophosphatidylglycerol (LPG). It acts by transphosphatidylation, releasing exclusively cyclic phosphate products as second products. Induces dermonecrosis, hemolysis, increased vascular permeability, edema, inflammatory response, and platelet aggregation. This Sicarius cf. damarensis (strain GJB-2008) (Six-eyed sand spider) protein is Dermonecrotic toxin SdSicTox-betaIIB1bi.